A 620-amino-acid chain; its full sequence is LysM domain receptor-like kinase 3 (620 aa).

The N-terminal stretch at 1-23 (MNLKNGLLLFILFLDCVFFKVES) is a signal peptide. Topologically, residues 24–231 (KCVKGCDVAL…YSRTGIAKGS (208 aa)) are extracellular. Cystine bridges form between Cys25/Cys92, Cys29/Cys154, and Cys90/Cys152. Asn46 is a glycosylation site (N-linked (GlcNAc...) asparagine). In terms of domain architecture, LysM 1; degenerate spans 46-72 (NISNFMQSKIVLTNSFDVIMSYNRDVV). 2 consecutive LysM domains span residues 102-148 (FEYT…KINV) and 167-210 (VTYP…VFIP). Chitin-binding positions include 108 to 114 (EGDDYDL) and 136 to 142 (DPNHIPV). N-linked (GlcNAc...) asparagine glycosylation is found at Asn147 and Asn199. Residues 232–252 (AVGIAMAGIFGLLLFVIYIYA) traverse the membrane as a helical segment. The Cytoplasmic segment spans residues 253–620 (KYFQKKEEEK…QSLINLLSTR (368 aa)). Positions 265-278 (LPQTSRAFSTQDAS) are enriched in polar residues. Residues 265 to 292 (LPQTSRAFSTQDASGSAEYETSGSSGHA) are disordered. Phosphoserine occurs at positions 269 and 273. Residues 322-595 (FSLDNKIGQG…RSIVVALMTL (274 aa)) enclose the Protein kinase domain. ATP-binding positions include 328–336 (IGQGGFGAV) and Lys349. The Proton acceptor role is filled by Asp441.

It belongs to the protein kinase superfamily. Ser/Thr protein kinase family. As to quaternary structure, forms homodimers and homooligomers. Forms heteromeric complexes with NFP at the cell periphery in nodules. Interacts with PUB1. Post-translationally, autophosphorylated. As to expression, expressed in the epidermal and root hair cells of the developing root hair zone during nonsymbiotic growth. Accumulates in roots and nodules during symbiotic growth with rhizobia. Localized at the cell periphery in a narrow zone of about two cell layers (e.g. L1/L2 zone) at the nodule apex upon infection by rhizobia, from the meristem to the infection zone (at protein level).

The protein localises to the cell membrane. The protein resides in the vacuole lumen. The enzyme catalyses L-seryl-[protein] + ATP = O-phospho-L-seryl-[protein] + ADP + H(+). The catalysed reaction is L-threonyl-[protein] + ATP = O-phospho-L-threonyl-[protein] + ADP + H(+). In terms of biological role, putative receptor for S.meliloti Nod factor signals essential for the establishment of the nitrogen-fixing, root nodule symbiosis with S.meliloti. Involved in the control of root hair curling after S.meliloti infection, probably by modulating the reorganization of the microtubular cytoskeleton in epidermal and cortical cells. Regulates a subset of Nod factor-induced genes. This is LysM domain receptor-like kinase 3 from Medicago truncatula (Barrel medic).